Reading from the N-terminus, the 180-residue chain is Large ribosomal subunit protein uL10 (180 aa).

The segment at 161-180 (SKAEGSEETESNETTETVEE) is disordered. The segment covering 166 to 180 (SEETESNETTETVEE) has biased composition (acidic residues).

The protein belongs to the universal ribosomal protein uL10 family. Part of the ribosomal stalk of the 50S ribosomal subunit. The N-terminus interacts with L11 and the large rRNA to form the base of the stalk. The C-terminus forms an elongated spine to which L12 dimers bind in a sequential fashion forming a multimeric L10(L12)X complex.

Forms part of the ribosomal stalk, playing a central role in the interaction of the ribosome with GTP-bound translation factors. The protein is Large ribosomal subunit protein uL10 of Finegoldia magna (strain ATCC 29328 / DSM 20472 / WAL 2508) (Peptostreptococcus magnus).